Here is a 291-residue protein sequence, read N- to C-terminus: 3-hydroxy-5-phosphonooxypentane-2,4-dione thiolase (291 aa).

Catalysis depends on Lys-203, which acts as the Schiff-base intermediate with substrate.

It belongs to the DeoC/FbaB aldolase family. As to quaternary structure, homodecamer.

It is found in the cytoplasm. It carries out the reaction dihydroxyacetone phosphate + acetyl-CoA = 3-hydroxy-2,4-dioxopentyl phosphate + CoA. Functionally, involved in the degradation of phospho-AI-2, thereby terminating induction of the lsr operon and closing the AI-2 signaling cycle. Catalyzes the transfer of an acetyl moiety from 3-hydroxy-5-phosphonooxypentane-2,4-dione to CoA to form glycerone phosphate and acetyl-CoA. The protein is 3-hydroxy-5-phosphonooxypentane-2,4-dione thiolase of Salmonella typhimurium (strain LT2 / SGSC1412 / ATCC 700720).